A 401-amino-acid polypeptide reads, in one-letter code: Imidazolonepropionase (401 aa).

Fe(3+) is bound by residues H70 and H72. Residues H70 and H72 each contribute to the Zn(2+) site. R79, Y142, and H175 together coordinate 4-imidazolone-5-propanoate. Y142 is a binding site for N-formimidoyl-L-glutamate. H240 is a Fe(3+) binding site. Position 240 (H240) interacts with Zn(2+). Q243 serves as a coordination point for 4-imidazolone-5-propanoate. Residue D315 participates in Fe(3+) binding. D315 provides a ligand contact to Zn(2+). Positions 317 and 319 each coordinate N-formimidoyl-L-glutamate. T320 is a binding site for 4-imidazolone-5-propanoate.

The protein belongs to the metallo-dependent hydrolases superfamily. HutI family. Zn(2+) serves as cofactor. The cofactor is Fe(3+).

The protein localises to the cytoplasm. It carries out the reaction 4-imidazolone-5-propanoate + H2O = N-formimidoyl-L-glutamate. It functions in the pathway amino-acid degradation; L-histidine degradation into L-glutamate; N-formimidoyl-L-glutamate from L-histidine: step 3/3. Its function is as follows. Catalyzes the hydrolytic cleavage of the carbon-nitrogen bond in imidazolone-5-propanoate to yield N-formimidoyl-L-glutamate. It is the third step in the universal histidine degradation pathway. This is Imidazolonepropionase from Caulobacter vibrioides (strain ATCC 19089 / CIP 103742 / CB 15) (Caulobacter crescentus).